A 166-amino-acid polypeptide reads, in one-letter code: Large ribosomal subunit protein uL10 (166 aa).

The protein belongs to the universal ribosomal protein uL10 family. As to quaternary structure, part of the ribosomal stalk of the 50S ribosomal subunit. The N-terminus interacts with L11 and the large rRNA to form the base of the stalk. The C-terminus forms an elongated spine to which L12 dimers bind in a sequential fashion forming a multimeric L10(L12)X complex.

In terms of biological role, forms part of the ribosomal stalk, playing a central role in the interaction of the ribosome with GTP-bound translation factors. This is Large ribosomal subunit protein uL10 from Pseudomonas fluorescens (strain ATCC BAA-477 / NRRL B-23932 / Pf-5).